Here is a 490-residue protein sequence, read N- to C-terminus: Betaine aldehyde dehydrogenase (490 aa).

K(+)-binding residues include Thr26, Ile27, and Asp93. 150–152 (GAW) contributes to the NAD(+) binding site. The active-site Charge relay system is Lys162. NAD(+) is bound at residue 176–179 (KPSE). Residue Val180 coordinates K(+). 230-233 (GVAS) contacts NAD(+). Leu246 contacts K(+). Glu252 acts as the Proton acceptor in catalysis. Positions 254, 286, and 387 each coordinate NAD(+). The active-site Nucleophile is the Cys286. Cysteine sulfenic acid (-SOH) is present on Cys286. K(+) contacts are provided by Lys457 and Gly460. Glu464 acts as the Charge relay system in catalysis.

This sequence belongs to the aldehyde dehydrogenase family. As to quaternary structure, dimer of dimers. The cofactor is K(+).

The catalysed reaction is betaine aldehyde + NAD(+) + H2O = glycine betaine + NADH + 2 H(+). It functions in the pathway amine and polyamine biosynthesis; betaine biosynthesis via choline pathway; betaine from betaine aldehyde: step 1/1. Functionally, involved in the biosynthesis of the osmoprotectant glycine betaine. Catalyzes the irreversible oxidation of betaine aldehyde to the corresponding acid. The sequence is that of Betaine aldehyde dehydrogenase from Escherichia coli O6:H1 (strain CFT073 / ATCC 700928 / UPEC).